A 165-amino-acid chain; its full sequence is C-phycoerythrin class 2 subunit alpha (165 aa).

Positions 75, 83, and 140 each coordinate phycourobilin.

It belongs to the phycobiliprotein family. Heterodimer of an alpha and a beta chain. Contains three covalently linked phycourobilin chromophores.

The protein localises to the cellular thylakoid membrane. Light-harvesting photosynthetic bile pigment-protein from the phycobiliprotein complex. The chain is C-phycoerythrin class 2 subunit alpha (mpeA) from Synechococcus sp. (strain WH8103).